A 415-amino-acid chain; its full sequence is Gamma-glutamyl phosphate reductase (415 aa).

Belongs to the gamma-glutamyl phosphate reductase family.

The protein localises to the cytoplasm. It catalyses the reaction L-glutamate 5-semialdehyde + phosphate + NADP(+) = L-glutamyl 5-phosphate + NADPH + H(+). The protein operates within amino-acid biosynthesis; L-proline biosynthesis; L-glutamate 5-semialdehyde from L-glutamate: step 2/2. In terms of biological role, catalyzes the NADPH-dependent reduction of L-glutamate 5-phosphate into L-glutamate 5-semialdehyde and phosphate. The product spontaneously undergoes cyclization to form 1-pyrroline-5-carboxylate. The sequence is that of Gamma-glutamyl phosphate reductase from Bacillus subtilis (strain 168).